The sequence spans 325 residues: NADH-quinone oxidoreductase subunit H (325 aa).

A run of 8 helical transmembrane segments spans residues 11 to 31 (ILLT…CGAF), 81 to 101 (FIFT…FAIV), 114 to 134 (IGIL…LFAG), 154 to 174 (VSYE…AGSF), 186 to 206 (MWNI…GVAV), 237 to 257 (FFVG…TLFF), 265 to 285 (LPSF…FILI), and 304 to 324 (ICLP…LYNA).

It belongs to the complex I subunit 1 family. In terms of assembly, NDH-1 is composed of 13 different subunits. Subunits NuoA, H, J, K, L, M, N constitute the membrane sector of the complex.

The protein resides in the cell inner membrane. It catalyses the reaction a quinone + NADH + 5 H(+)(in) = a quinol + NAD(+) + 4 H(+)(out). Its function is as follows. NDH-1 shuttles electrons from NADH, via FMN and iron-sulfur (Fe-S) centers, to quinones in the respiratory chain. The immediate electron acceptor for the enzyme in this species is believed to be ubiquinone. Couples the redox reaction to proton translocation (for every two electrons transferred, four hydrogen ions are translocated across the cytoplasmic membrane), and thus conserves the redox energy in a proton gradient. This subunit may bind ubiquinone. This is NADH-quinone oxidoreductase subunit H from Proteus mirabilis (strain HI4320).